Here is a 291-residue protein sequence, read N- to C-terminus: Formamidopyrimidine-DNA glycosylase (291 aa).

P2 acts as the Schiff-base intermediate with DNA in catalysis. The Proton donor role is filled by E3. The active-site Proton donor; for beta-elimination activity is K58. Positions 100, 123, and 166 each coordinate DNA. The FPG-type zinc-finger motif lies at 257-291 (SVYGREGKECFQCGIPITRISQSGRSSFYCSQCQK). Catalysis depends on R281, which acts as the Proton donor; for delta-elimination activity.

The protein belongs to the FPG family. Monomer. It depends on Zn(2+) as a cofactor.

The catalysed reaction is Hydrolysis of DNA containing ring-opened 7-methylguanine residues, releasing 2,6-diamino-4-hydroxy-5-(N-methyl)formamidopyrimidine.. The enzyme catalyses 2'-deoxyribonucleotide-(2'-deoxyribose 5'-phosphate)-2'-deoxyribonucleotide-DNA = a 3'-end 2'-deoxyribonucleotide-(2,3-dehydro-2,3-deoxyribose 5'-phosphate)-DNA + a 5'-end 5'-phospho-2'-deoxyribonucleoside-DNA + H(+). In terms of biological role, involved in base excision repair of DNA damaged by oxidation or by mutagenic agents. Acts as a DNA glycosylase that recognizes and removes damaged bases. Has a preference for oxidized purines, such as 7,8-dihydro-8-oxoguanine (8-oxoG). Has AP (apurinic/apyrimidinic) lyase activity and introduces nicks in the DNA strand. Cleaves the DNA backbone by beta-delta elimination to generate a single-strand break at the site of the removed base with both 3'- and 5'-phosphates. This Bartonella quintana (strain Toulouse) (Rochalimaea quintana) protein is Formamidopyrimidine-DNA glycosylase.